Here is a 146-residue protein sequence, read N- to C-terminus: UPF0260 protein Swoo_2117 (146 aa).

This sequence belongs to the UPF0260 family.

This chain is UPF0260 protein Swoo_2117, found in Shewanella woodyi (strain ATCC 51908 / MS32).